We begin with the raw amino-acid sequence, 350 residues long: Arabinogalactan endo-beta-1,4-galactanase A (350 aa).

Residues 1-17 (MILSSLLPLSLVTLTSA) form the signal peptide. Asn-129 carries an N-linked (GlcNAc...) asparagine glycan. The active-site Proton donor is the Glu-153. Residue Glu-263 is the Nucleophile of the active site.

It belongs to the glycosyl hydrolase 53 family.

It localises to the secreted. It carries out the reaction The enzyme specifically hydrolyzes (1-&gt;4)-beta-D-galactosidic linkages in type I arabinogalactans.. Its function is as follows. Endogalactanase involved in the degradation of plant cell wall polysaccharides, and more particularly of hairy regions of pectin. The chain is Arabinogalactan endo-beta-1,4-galactanase A (galA) from Emericella nidulans (strain FGSC A4 / ATCC 38163 / CBS 112.46 / NRRL 194 / M139) (Aspergillus nidulans).